Here is a 488-residue protein sequence, read N- to C-terminus: Multidrug resistance outer membrane protein MdtP (488 aa).

The signal sequence occupies residues 1 to 23; it reads MINRQLSRLLLCSILGSTTLISG. The N-palmitoyl cysteine moiety is linked to residue C24. A lipid anchor (S-diacylglycerol cysteine) is attached at C24.

Belongs to the outer membrane factor (OMF) (TC 1.B.17) family. In terms of assembly, could be part of a tripartite efflux system composed of MdtN, MdtO and MdtP.

Its subcellular location is the cell outer membrane. In terms of biological role, could be involved in resistance to puromycin, acriflavine and tetraphenylarsonium chloride. In Shigella flexneri, this protein is Multidrug resistance outer membrane protein MdtP (mdtP).